Consider the following 635-residue polypeptide: Threonine--tRNA ligase (635 aa).

In terms of domain architecture, TGS spans 1-61 (MINISFPDGS…DNDCKLRILT (61 aa)). The catalytic stretch occupies residues 242-533 (DHRKLGRELD…LIEEYAGRFP (292 aa)). Zn(2+) is bound by residues Cys-333, His-384, and His-510.

This sequence belongs to the class-II aminoacyl-tRNA synthetase family. As to quaternary structure, homodimer. Requires Zn(2+) as cofactor.

The protein localises to the cytoplasm. The catalysed reaction is tRNA(Thr) + L-threonine + ATP = L-threonyl-tRNA(Thr) + AMP + diphosphate + H(+). Catalyzes the attachment of threonine to tRNA(Thr) in a two-step reaction: L-threonine is first activated by ATP to form Thr-AMP and then transferred to the acceptor end of tRNA(Thr). Also edits incorrectly charged L-seryl-tRNA(Thr). This is Threonine--tRNA ligase from Rickettsia africae (strain ESF-5).